Here is a 428-residue protein sequence, read N- to C-terminus: Serine--tRNA ligase (428 aa).

237 to 239 contributes to the L-serine binding site; that stretch reads TAE. Position 268–270 (268–270) interacts with ATP; sequence RSE. Glu-291 contributes to the L-serine binding site. 355–358 lines the ATP pocket; that stretch reads EISS. Residue Ser-390 coordinates L-serine.

The protein belongs to the class-II aminoacyl-tRNA synthetase family. Type-1 seryl-tRNA synthetase subfamily. Homodimer. The tRNA molecule binds across the dimer.

The protein localises to the cytoplasm. The catalysed reaction is tRNA(Ser) + L-serine + ATP = L-seryl-tRNA(Ser) + AMP + diphosphate + H(+). The enzyme catalyses tRNA(Sec) + L-serine + ATP = L-seryl-tRNA(Sec) + AMP + diphosphate + H(+). It functions in the pathway aminoacyl-tRNA biosynthesis; selenocysteinyl-tRNA(Sec) biosynthesis; L-seryl-tRNA(Sec) from L-serine and tRNA(Sec): step 1/1. Its function is as follows. Catalyzes the attachment of serine to tRNA(Ser). Is also able to aminoacylate tRNA(Sec) with serine, to form the misacylated tRNA L-seryl-tRNA(Sec), which will be further converted into selenocysteinyl-tRNA(Sec). This chain is Serine--tRNA ligase, found in Hydrogenovibrio crunogenus (strain DSM 25203 / XCL-2) (Thiomicrospira crunogena).